The following is a 159-amino-acid chain: Phosphopantetheine adenylyltransferase (159 aa).

Thr-10 contacts substrate. ATP contacts are provided by residues 10–11 (TF) and His-18. Substrate is bound by residues Lys-42, Met-74, and Arg-88. ATP contacts are provided by residues 89–91 (GLR), Glu-99, and 124–130 (WSFISSS).

This sequence belongs to the bacterial CoaD family. As to quaternary structure, homohexamer. Mg(2+) is required as a cofactor.

It localises to the cytoplasm. The catalysed reaction is (R)-4'-phosphopantetheine + ATP + H(+) = 3'-dephospho-CoA + diphosphate. The protein operates within cofactor biosynthesis; coenzyme A biosynthesis; CoA from (R)-pantothenate: step 4/5. Reversibly transfers an adenylyl group from ATP to 4'-phosphopantetheine, yielding dephospho-CoA (dPCoA) and pyrophosphate. In Salmonella arizonae (strain ATCC BAA-731 / CDC346-86 / RSK2980), this protein is Phosphopantetheine adenylyltransferase.